The following is a 363-amino-acid chain: Protein TAX-1 (363 aa).

A required for localization to the flagellum and for flagellar motility region spans residues 129–363 (RYGNAEEILS…IPFRGVAAEQ (235 aa)). TPR repeat units follow at residues 157–190 (AELH…LSVM) and 199–232 (TFAY…WLKH).

As to quaternary structure, interacts with TTC29.

It is found in the cytoplasm. The protein resides in the cytoskeleton. It localises to the flagellum axoneme. Functionally, required for flagellum motility. This is Protein TAX-1 from Trypanosoma brucei brucei (strain 927/4 GUTat10.1).